The chain runs to 205 residues: High frequency lysogenization protein HflD homolog (205 aa).

Belongs to the HflD family.

It is found in the cytoplasm. It localises to the cell inner membrane. In Vibrio vulnificus (strain CMCP6), this protein is High frequency lysogenization protein HflD homolog.